Here is a 174-residue protein sequence, read N- to C-terminus: Cytoglobin-1 (174 aa).

The Globin domain occupies 15-165; sequence SLTEEDVCVI…LYWQMNRVYA (151 aa). Residues histidine 78 and histidine 110 each coordinate heme b.

Belongs to the globin family. Monomeric. As to expression, expressed in all tissues examined with highest levels in brain, eye, gut and heart.

It is found in the cytoplasm. The protein localises to the nucleus. It carries out the reaction Fe(II)-heme b-[protein] + nitric oxide + O2 = Fe(III)-heme b-[protein] + nitrate. The enzyme catalyses Fe(III)-heme b-[protein] + nitric oxide + H2O = Fe(II)-heme b-[protein] + nitrite + 2 H(+). It catalyses the reaction 2 superoxide + 2 H(+) = H2O2 + O2. The catalysed reaction is H2O2 + AH2 = A + 2 H2O. In terms of biological role, probable multifunctional globin with a hexacoordinated heme iron required for the catalysis of various reactions depending on redox condition of the cell as well as oxygen availability. Has a nitric oxide dioxygenase (NOD) activity and is most probably involved in cell-mediated and oxygen-dependent nitric oxide consumption. Under normoxic conditions functions as a nitric oxide dioxygenase (NOD) but under hypoxic conditions the globin may switch its function to that of a nitrite (NO2) reductase (NiR), generating nitric oxide. Could also have peroxidase and superoxide dismutase activities, detoxifying reactive oxygen species and protecting cells against oxidative stress. Also binds dioxygen with low affinity and could function as an oxygen sensor but has probably no function as a respiratory oxygen carrier. The polypeptide is Cytoglobin-1 (cygb1) (Danio rerio (Zebrafish)).